The following is a 518-amino-acid chain: Xylose import ATP-binding protein XylG (518 aa).

2 consecutive ABC transporter domains span residues 6 to 245 (LQMN…VGRE) and 262 to 507 (FEAR…LSHS). ATP is bound at residue 38 to 45 (GENGAGKS).

Belongs to the ABC transporter superfamily. Xylose importer (TC 3.A.1.2.4) family. As to quaternary structure, the complex is composed of two ATP-binding proteins (XylG), two transmembrane proteins (XylH) and a solute-binding protein (XylF).

The protein resides in the cell inner membrane. It carries out the reaction D-xylose(out) + ATP + H2O = D-xylose(in) + ADP + phosphate + H(+). In terms of biological role, part of the ABC transporter complex XylFGH involved in xylose import. Responsible for energy coupling to the transport system. This is Xylose import ATP-binding protein XylG from Pseudomonas syringae pv. syringae (strain B728a).